The primary structure comprises 254 residues: Pyridoxine 5'-phosphate synthase (254 aa).

A 3-amino-2-oxopropyl phosphate-binding site is contributed by N12. Position 14–15 (14–15) interacts with 1-deoxy-D-xylulose 5-phosphate; that stretch reads DH. R23 serves as a coordination point for 3-amino-2-oxopropyl phosphate. Catalysis depends on H48, which acts as the Proton acceptor. R50 and H55 together coordinate 1-deoxy-D-xylulose 5-phosphate. E75 (proton acceptor) is an active-site residue. T105 lines the 1-deoxy-D-xylulose 5-phosphate pocket. The Proton donor role is filled by H199. 3-amino-2-oxopropyl phosphate contacts are provided by residues G200 and 221–222; that span reads GF.

It belongs to the PNP synthase family. As to quaternary structure, homooctamer; tetramer of dimers.

The protein localises to the cytoplasm. It catalyses the reaction 3-amino-2-oxopropyl phosphate + 1-deoxy-D-xylulose 5-phosphate = pyridoxine 5'-phosphate + phosphate + 2 H2O + H(+). It functions in the pathway cofactor biosynthesis; pyridoxine 5'-phosphate biosynthesis; pyridoxine 5'-phosphate from D-erythrose 4-phosphate: step 5/5. Catalyzes the complicated ring closure reaction between the two acyclic compounds 1-deoxy-D-xylulose-5-phosphate (DXP) and 3-amino-2-oxopropyl phosphate (1-amino-acetone-3-phosphate or AAP) to form pyridoxine 5'-phosphate (PNP) and inorganic phosphate. In Rhodopseudomonas palustris (strain TIE-1), this protein is Pyridoxine 5'-phosphate synthase.